The following is a 527-amino-acid chain: Amine oxidase [flavin-containing] A (527 aa).

Met1 is subject to N-acetylmethionine. The Cytoplasmic segment spans residues 1–497 (MASREKTSIE…HTFWERNLPS (497 aa)). Ser383 carries the phosphoserine modification. Cys406 carries the post-translational modification S-8alpha-FAD cysteine. The helical; Anchor for type IV membrane protein transmembrane segment at 498 to 518 (VTGLLKLIGFTTSVTALWIVA) threads the bilayer. The Mitochondrial intermembrane segment spans residues 519–527 (YKFRLLRRS). An interaction with membrane phospholipid headgroups region spans residues 520–522 (KFR).

The protein belongs to the flavin monoamine oxidase family. As to quaternary structure, monomer, homo- or heterodimer (containing two subunits of similar size). Each subunit contains a covalently bound flavin. Enzymatically active as monomer. It depends on FAD as a cofactor.

It localises to the mitochondrion outer membrane. It carries out the reaction a secondary aliphatic amine + O2 + H2O = a primary amine + an aldehyde + H2O2. The enzyme catalyses a primary methyl amine + O2 + H2O = an aldehyde + H2O2 + NH4(+). The catalysed reaction is (R)-adrenaline + O2 + H2O = (R)-3,4-dihydroxymandelaldehyde + methylamine + H2O2. It catalyses the reaction dopamine + O2 + H2O = 3,4-dihydroxyphenylacetaldehyde + H2O2 + NH4(+). It carries out the reaction tyramine + O2 + H2O = (4-hydroxyphenyl)acetaldehyde + H2O2 + NH4(+). The enzyme catalyses (R)-noradrenaline + O2 + H2O = (R)-3,4-dihydroxymandelaldehyde + H2O2 + NH4(+). The catalysed reaction is serotonin + O2 + H2O = (5-hydroxyindol-3-yl)acetaldehyde + H2O2 + NH4(+). It catalyses the reaction kynuramine + O2 + H2O = 3-(2-aminophenyl)-3-oxopropanal + H2O2 + NH4(+). It carries out the reaction tryptamine + O2 + H2O = indole-3-acetaldehyde + H2O2 + NH4(+). The enzyme catalyses 2-phenylethylamine + O2 + H2O = 2-phenylacetaldehyde + H2O2 + NH4(+). Its function is as follows. Catalyzes the oxidative deamination of primary and some secondary amine such as neurotransmitters, with concomitant reduction of oxygen to hydrogen peroxide and has important functions in the metabolism of neuroactive and vasoactive amines in the central nervous system and peripheral tissues. Preferentially oxidizes serotonin. Also catalyzes the oxidative deamination of kynuramine to 3-(2-aminophenyl)-3-oxopropanal that can spontaneously condense to 4-hydroxyquinoline. The chain is Amine oxidase [flavin-containing] A from Canis lupus familiaris (Dog).